A 342-amino-acid chain; its full sequence is tRNA N6-adenosine threonylcarbamoyltransferase (342 aa).

Fe cation contacts are provided by H115 and H119. Substrate-binding positions include 138–142 (IISGG), D171, G184, D188, and N276. Fe cation is bound at residue D304.

This sequence belongs to the KAE1 / TsaD family. It depends on Fe(2+) as a cofactor.

The protein localises to the cytoplasm. The catalysed reaction is L-threonylcarbamoyladenylate + adenosine(37) in tRNA = N(6)-L-threonylcarbamoyladenosine(37) in tRNA + AMP + H(+). Its function is as follows. Required for the formation of a threonylcarbamoyl group on adenosine at position 37 (t(6)A37) in tRNAs that read codons beginning with adenine. Is involved in the transfer of the threonylcarbamoyl moiety of threonylcarbamoyl-AMP (TC-AMP) to the N6 group of A37, together with TsaE and TsaB. TsaD likely plays a direct catalytic role in this reaction. This is tRNA N6-adenosine threonylcarbamoyltransferase from Endomicrobium trichonymphae.